The sequence spans 576 residues: G protein-coupled receptor kinase 6 (576 aa).

Residues 1 to 185 (MELENIVANT…LERQPVTKNT (185 aa)) are N-terminal. Positions 53 to 171 (YHSLCERQPI…LDSIYFNRFL (119 aa)) constitute an RGS domain. The 263-residue stretch at 186–448 (FRQYRVLGKG…AREVKEHPLF (263 aa)) folds into the Protein kinase domain. ATP is bound by residues 192 to 200 (LGKGGFGEV), Lys215, and 264 to 270 (TLMNGGD). The active-site Proton acceptor is the Asp311. An ATP-binding site is contributed by 315 to 318 (ENIL). Residues 449–514 (KKLNFKRLGA…GSVSIPWQNE (66 aa)) enclose the AGC-kinase C-terminal domain. Residue Ser484 is modified to Phosphoserine; by autocatalysis. Thr485 carries the phosphothreonine; by autocatalysis modification. Residues Cys561, Cys562, and Cys565 are each lipidated (S-palmitoyl cysteine). Residues Ser566 and Ser568 each carry the phosphoserine modification.

It belongs to the protein kinase superfamily. AGC Ser/Thr protein kinase family. GPRK subfamily. As to quaternary structure, interacts with GIT1. As to expression, widely expressed. Detectable in all brain areas examined.

It localises to the membrane. It carries out the reaction [G-protein-coupled receptor] + ATP = [G-protein-coupled receptor]-phosphate + ADP + H(+). Its function is as follows. Specifically phosphorylates the activated forms of G protein-coupled receptors. Such receptor phosphorylation initiates beta-arrestin-mediated receptor desensitization, internalization, and signaling events leading to their desensitization. Seems to be involved in the desensitization of D2-like dopamine receptors in striatum and chemokine receptor CXCR4 which is critical for CXCL12-induced cell chemotaxis. Phosphorylates rhodopsin (RHO) (in vitro) and a non G-protein-coupled receptor: LRP6 during Wnt signaling (in vitro). This Rattus norvegicus (Rat) protein is G protein-coupled receptor kinase 6 (Grk6).